The chain runs to 328 residues: Probable G-protein coupled receptor 82 (328 aa).

Topologically, residues 1–11 (MTNNSTCIQPS) are extracellular. Residues N3 and N4 are each glycosylated (N-linked (GlcNAc...) asparagine). Residues 12–32 (VISTTALPVTYIFLFIIGLFG) form a helical membrane-spanning segment. At 33-55 (NSLAQWVFLTKIGKKTSTHIYLA) the chain is on the cytoplasmic side. A helical membrane pass occupies residues 56–76 (NLVTANLLVCTAMPFMGIYFL). At 77–92 (RGFYWKYQSVQCRLVN) the chain is on the extracellular side. Residues 93–115 (FLGTLSMHVSMFVSLLILSWIAI) form a helical membrane-spanning segment. Residues 116-156 (SRYATLMKKESKQEATSCYERMFYGHVLKRFRQPNFARTMC) lie on the Cytoplasmic side of the membrane. The chain crosses the membrane as a helical span at residues 157 to 177 (IYIWGVVLVIIIPVTLYYSVV). Residues 178 to 197 (EATEEGQSQCYNRQMELGAR) are Extracellular-facing. The helical transmembrane segment at 198-218 (PSQIAGLIGTTFIGFSFLVVV) threads the bilayer. The Cytoplasmic portion of the chain corresponds to 219-251 (TSYYSLVSHLRRVRTCTSITEKDLTYRSVKRHL). A helical transmembrane segment spans residues 252–272 (LIIQVLLVVCFLPYSIFKPIF). The Extracellular portion of the chain corresponds to 273 to 328 (YVLHQREGDCQQLNYLIEAKNILTCLASARSSTDPIIFLLLDKTFKKTLYGLLTKS).

This sequence belongs to the G-protein coupled receptor 1 family.

The protein localises to the cell membrane. Orphan receptor. This chain is Probable G-protein coupled receptor 82 (Gpr82), found in Mus musculus (Mouse).